The primary structure comprises 189 residues: Nucleoside diphosphate kinase 6 (189 aa).

ATP-binding residues include K19, F68, R96, T102, R116, and N126. Catalysis depends on H129, which acts as the Pros-phosphohistidine intermediate.

The protein belongs to the NDK family. Requires Mg(2+) as cofactor.

It catalyses the reaction a 2'-deoxyribonucleoside 5'-diphosphate + ATP = a 2'-deoxyribonucleoside 5'-triphosphate + ADP. The enzyme catalyses a ribonucleoside 5'-diphosphate + ATP = a ribonucleoside 5'-triphosphate + ADP. Major role in the synthesis of nucleoside triphosphates other than ATP. The ATP gamma phosphate is transferred to the NDP beta phosphate via a ping-pong mechanism, using a phosphorylated active-site intermediate. In Mus musculus (Mouse), this protein is Nucleoside diphosphate kinase 6 (Nme6).